The chain runs to 571 residues: Urease subunit alpha (571 aa).

Positions 133-571 (GGIDTHVHFI…LPLTQRYFLF (439 aa)) constitute a Urease domain. H138, H140, and K221 together coordinate Ni(2+). K221 bears the N6-carboxylysine mark. Residue H223 coordinates substrate. Ni(2+)-binding residues include H250 and H276. H324 (proton donor) is an active-site residue. D364 contributes to the Ni(2+) binding site.

The protein belongs to the metallo-dependent hydrolases superfamily. Urease alpha subunit family. Heterotrimer of UreA (gamma), UreB (beta) and UreC (alpha) subunits. Three heterotrimers associate to form the active enzyme. Ni cation is required as a cofactor. Carboxylation allows a single lysine to coordinate two nickel ions.

It localises to the cytoplasm. The enzyme catalyses urea + 2 H2O + H(+) = hydrogencarbonate + 2 NH4(+). Its pathway is nitrogen metabolism; urea degradation; CO(2) and NH(3) from urea (urease route): step 1/1. This is Urease subunit alpha from Staphylococcus aureus (strain bovine RF122 / ET3-1).